The primary structure comprises 461 residues: Argininosuccinate lyase (461 aa).

It belongs to the lyase 1 family. Argininosuccinate lyase subfamily.

Its subcellular location is the cytoplasm. It catalyses the reaction 2-(N(omega)-L-arginino)succinate = fumarate + L-arginine. It participates in amino-acid biosynthesis; L-arginine biosynthesis; L-arginine from L-ornithine and carbamoyl phosphate: step 3/3. The sequence is that of Argininosuccinate lyase from Bacillus subtilis (strain 168).